The primary structure comprises 207 residues: Histone H1 (207 aa).

Over residues 1–15 (MAEVAPAPAAAAPAK) the composition is skewed to low complexity. Disordered stretches follow at residues 1 to 28 (MAEV…PKKA) and 105 to 207 (EAKK…PKKK). A2 bears the N-acetylalanine mark. A compositionally biased stretch (basic residues) spans 16–27 (APKKKAAAKPKK). The region spanning 28–101 (AGPSVGELIV…GASGSFKLNK (74 aa)) is the H15 domain. 2 stretches are compositionally biased toward basic residues: residues 117-168 (KAKK…KVKK) and 175-207 (KAAK…PKKK).

It belongs to the histone H1/H5 family. As to expression, oncorhyncin II is expressed in skin.

It is found in the nucleus. The protein localises to the chromosome. Its subcellular location is the secreted. In terms of biological role, histones H1 are necessary for the condensation of nucleosome chains into higher-order structures. Functionally, oncorhyncin II has antibacterial activity against Gram-positive and Gram-negative bacteria at submicromolar concentrations. Potentially important role in mucosal defense. The polypeptide is Histone H1 (Oncorhynchus mykiss (Rainbow trout)).